Reading from the N-terminus, the 283-residue chain is Pyridoxine/pyridoxal/pyridoxamine kinase (283 aa).

Substrate contacts are provided by Ser23 and His59. Asp125 is a binding site for ATP. Tyr136 contacts Mg(2+). ATP contacts are provided by residues Thr157, Glu162, Thr195, 222–225, and Thr232; that span reads HAHV. Glu162 is a Mg(2+) binding site. Asp234 lines the substrate pocket.

Belongs to the pyridoxine kinase family. PdxK subfamily. Homodimer. Mg(2+) serves as cofactor.

It carries out the reaction pyridoxal + ATP = pyridoxal 5'-phosphate + ADP + H(+). The catalysed reaction is pyridoxine + ATP = pyridoxine 5'-phosphate + ADP + H(+). The enzyme catalyses pyridoxamine + ATP = pyridoxamine 5'-phosphate + ADP + H(+). The protein operates within cofactor metabolism; pyridoxal 5'-phosphate salvage; pyridoxal 5'-phosphate from pyridoxal: step 1/1. It functions in the pathway cofactor metabolism; pyridoxal 5'-phosphate salvage; pyridoxine 5'-phosphate from pyridoxine: step 1/1. Its pathway is cofactor metabolism; pyridoxal 5'-phosphate salvage; pyridoxamine 5'-phosphate from pyridoxamine: step 1/1. Its function is as follows. B6-vitamer kinase involved in the salvage pathway of pyridoxal 5'-phosphate (PLP). Catalyzes the phosphorylation of pyridoxine (PN), pyridoxal (PL), and pyridoxamine (PM), forming their respective 5'-phosphorylated esters, i.e. PNP, PLP and PMP. This is Pyridoxine/pyridoxal/pyridoxamine kinase from Bordetella bronchiseptica (strain ATCC BAA-588 / NCTC 13252 / RB50) (Alcaligenes bronchisepticus).